The primary structure comprises 553 residues: Solute carrier family 22 member 2 (553 aa).

Residues 1–21 lie on the Cytoplasmic side of the membrane; sequence MPTVDDILEHIGEFHLFQKQT. Residues 22–42 traverse the membrane as a helical segment; that stretch reads FFLLALLSGAFTPIYVGIVFL. The Extracellular segment spans residues 43–150; that stretch reads GFTPNHHCRS…LVCAHSWMLD (108 aa). Residue Asn71 is glycosylated (N-linked (GlcNAc...) asparagine). A helical membrane pass occupies residues 151 to 171; the sequence is LFQSLVNVGFFIGAVGIGYLA. Residues 172-177 are Cytoplasmic-facing; it reads DRFGRK. The chain crosses the membrane as a helical span at residues 178-198; sequence FCLLVTILINAISGVLMAISP. Residues 199–210 are Extracellular-facing; sequence NYAWMLVFRFLQ. A helical transmembrane segment spans residues 211 to 231; that stretch reads GLVSKAGWLIGYILITEFVGL. Over 232 to 238 the chain is Cytoplasmic; that stretch reads GYRRTVG. A helical transmembrane segment spans residues 239-259; it reads ICYQIAFTVGLLILAGVAYAL. Over 260–263 the chain is Extracellular; that stretch reads PNWR. A helical transmembrane segment spans residues 264–284; the sequence is WLQFAVTLPNFCFLLYFWCIP. The Proline-rich sequence motif lies at 284–288; it reads PESPR. Residues 285 to 348 are Cytoplasmic-facing; that stretch reads ESPRWLISQN…VRTPQIRKHT (64 aa). A helical transmembrane segment spans residues 349-369; the sequence is LILMYNWFTSSVLYQGLIMHM. Topologically, residues 370-375 are extracellular; sequence GLAGDN. The helical transmembrane segment at 376-396 threads the bilayer; that stretch reads IYLDFFYSALVEFPAAFIIIL. Topologically, residues 397 to 404 are cytoplasmic; the sequence is TIDRIGRR. A helical membrane pass occupies residues 405 to 425; the sequence is YPWAVSNMVAGAACLASVFIP. Residues 426-432 are Extracellular-facing; that stretch reads DDLQWLK. A helical membrane pass occupies residues 433 to 453; the sequence is ITVACLGRMGITIAYEMVCLV. Residues 454-464 lie on the Cytoplasmic side of the membrane; that stretch reads NAELYPTYIRN. Residues 465–485 traverse the membrane as a helical segment; sequence LAVLVCSSMCDIGGIVTPFLV. The Extracellular segment spans residues 486–494; that stretch reads YRLTDIWLE. A helical membrane pass occupies residues 495-515; it reads FPLVVFAVVGLVAGGLVLLLP. The Cytoplasmic portion of the chain corresponds to 516 to 553; the sequence is ETKGKALPETIEDAEKMQRPRKKKEKRIYLQVKKAELS.

Belongs to the major facilitator (TC 2.A.1) superfamily. Organic cation transporter (TC 2.A.1.19) family. In terms of processing, tyrosine phosphorylated by tyrosine-protein kinase YES1. As to expression, expressed in kidney and ureter. To a lower extent, also expressed in brain and embryo.

The protein localises to the basolateral cell membrane. It localises to the basal cell membrane. It is found in the apical cell membrane. It catalyses the reaction (R)-noradrenaline(out) = (R)-noradrenaline(in). The enzyme catalyses (R)-adrenaline(out) = (R)-adrenaline(in). The catalysed reaction is serotonin(out) = serotonin(in). It carries out the reaction dopamine(out) = dopamine(in). It catalyses the reaction histamine(out) = histamine(in). The enzyme catalyses thiamine(in) = thiamine(out). The catalysed reaction is creatinine(in) = creatinine(out). It carries out the reaction 1-methylnicotinamide(out) = 1-methylnicotinamide(in). It catalyses the reaction guanidine(out) = guanidine(in). The enzyme catalyses choline(out) = choline(in). The catalysed reaction is agmatine(out) = agmatine(in). It carries out the reaction putrescine(out) = putrescine(in). It catalyses the reaction spermidine(in) = spermidine(out). The enzyme catalyses tyramine(in) = tyramine(out). The catalysed reaction is L-histidyl-L-proline diketopiperazine(in) = L-histidyl-L-proline diketopiperazine(out). It carries out the reaction (R)-salsolinol(in) = (R)-salsolinol(out). It catalyses the reaction N-methyl-(R)-salsolinol(in) = N-methyl-(R)-salsolinol(out). The enzyme catalyses acetylcholine(in) = acetylcholine(out). The catalysed reaction is prostaglandin F2alpha(out) = prostaglandin F2alpha(in). It carries out the reaction prostaglandin E2(out) = prostaglandin E2(in). Its activity is regulated as follows. Tyrosine phosphorylation of the transporter leads to activation of the transport activity. TEA uptake is activated by tyrosine phosphorylation. Inhibited by cGMP, most likely through a cGMP-binding protein that interacts with OCT2. Electrogenic voltage-dependent transporter that mediates the transport of a variety of organic cations such as endogenous bioactive amines, cationic drugs and xenobiotics. Functions as a Na(+)-independent, bidirectional uniporter. Cation cellular uptake or release is driven by the electrochemical potential, i.e. membrane potential and concentration gradient. However, may also engage electroneutral cation exchange when saturating concentrations of cation substrates are reached. Predominantly expressed at the basolateral membrane of hepatocytes and proximal tubules and involved in the uptake and disposition of cationic compounds by hepatic and renal clearance from the blood flow. Implicated in monoamine neurotransmitters uptake such as histamine, dopamine, adrenaline/epinephrine, noradrenaline/norepinephrine, serotonin and tyramine, thereby supporting a physiological role in the central nervous system by regulating interstitial concentrations of neurotransmitters. Also capable of transporting dopaminergic neuromodulators cyclo(his-pro), salsolinol and N-methyl-salsolinol, thereby involved in the maintenance of dopaminergic cell integrity in the central nervous system. Mediates the bidirectional transport of acetylcholine (ACh) at the apical membrane of ciliated cell in airway epithelium, thereby playing a role in luminal release of ACh from bronchial epithelium. Also transports guanidine and endogenous monoamines such as vitamin B1/thiamine, creatinine and N-1-methylnicotinamide (NMN). Mediates the uptake and efflux of quaternary ammonium compound choline. Mediates the bidirectional transport of polyamine agmatine and the uptake of polyamines putrescine and spermidine. Able to transport non-amine endogenous compounds such as prostaglandin E2 (PGE2) and prostaglandin F2-alpha (PGF2-alpha). Also involved in the uptake of xenobiotic 4-(4-(dimethylamino)styryl)-N-methylpyridinium (ASP). May contribute to regulate the transport of organic compounds in testis across the blood-testis-barrier. The protein is Solute carrier family 22 member 2 of Mus musculus (Mouse).